The chain runs to 850 residues: Pentatricopeptide repeat-containing protein At3g49170, chloroplastic (850 aa).

Residues 1-50 constitute a chloroplast transit peptide; sequence MAMISFSFPSPAKLPIKSQPSVSNRINVADRLILRHLNAGDLRGAVSALD. 17 PPR repeats span residues 61–95, 96–130, 131–164, 165–199, 201–232, 233–267, 268–302, 303–334, 335–370, 372–406, 407–437, 438–472, 473–507, 508–538, 539–573, 574–609, and 610–640; these read DSVT…DIEP, DSVL…GKRD, VVSW…GLVP, NDYC…GHFE, DVCV…MSEL, NVVT…GFES, DKFT…GLVD, DVEC…MEDH, SVMS…GHVE, NHFT…GLAS, NSSV…LSEK, NLVS…ELGV, SAFT…GLSC, NQPV…MENR, NVIS…GVKP, NEVT…KIKP, and KMEH…MPFQ. A type E motif region spans residues 645–720; that stretch reads VWRTFLGACR…EGGCSWIEVG (76 aa). The type E(+) motif stretch occupies residues 721 to 751; it reads DKIHKFYVGDTAHPNAHQIYDELDRLITEIK. A type DYW motif region spans residues 752 to 850; the sequence is RCGYVPDTDL…DGKCSCNDYW (99 aa).

Belongs to the PPR family. PCMP-H subfamily.

It is found in the plastid. It localises to the chloroplast. Functionally, may play a role in embryogenesis. This Arabidopsis thaliana (Mouse-ear cress) protein is Pentatricopeptide repeat-containing protein At3g49170, chloroplastic (EMB2261).